We begin with the raw amino-acid sequence, 529 residues long: UDP-glucuronosyltransferase 2B11 (529 aa).

A signal peptide spans 1–21 (MTLKWTSVLLLIHLSCYFSSG). Residue lysine 135 is modified to N6-succinyllysine. Asparagine 315 carries N-linked (GlcNAc...) asparagine glycosylation. The helical transmembrane segment at 493 to 513 (VIGFLLACVATVIFIITKFCL) threads the bilayer.

The protein belongs to the UDP-glycosyltransferase family. In terms of tissue distribution, widely expressed.

The protein resides in the microsome membrane. It localises to the endoplasmic reticulum membrane. It carries out the reaction glucuronate acceptor + UDP-alpha-D-glucuronate = acceptor beta-D-glucuronoside + UDP + H(+). Functionally, UDPGT is of major importance in the conjugation and subsequent elimination of potentially toxic xenobiotics and endogenous compounds. In Homo sapiens (Human), this protein is UDP-glucuronosyltransferase 2B11 (UGT2B11).